A 598-amino-acid chain; its full sequence is MDESHIRNFAIIAHIDHGKSTLADRLIEECNGLDEREMKDQVLDSMDIERERGITIKAQTVRLAYKAKDGQTYYLNLMDTPGHVDFSYEVSRSLAACEGSLLIVDSSQGVEAQTLANVYKAIDSNHEIIPVLNKIDLASSDPDKVKLQIEDMIGIDASESLLVSAKSGIGIQDVLEAIVSRLPAPSGKSENPLKAILVDTWYDTYLGIVILLRIKDGVIRKGMKIVMMSNNAVYQVDNVGIFTPHKKVVDQLSVGEIGFITASIKELSDCKVGDTITEEQRRCSEPLPGFRTIHPVVFCSIFPNEAGEFERLREALKKLQLNDASFTFEIEVSNALGYGFRCGFLGMLHLEVIQERLEREFNLDLTATAPGVIYQVTTRSGDVRKVHNPHDFGESQDIANIKEPWICATIMVPDQYLGVIMSLCNNKRGEKLDLSYSGNTALLKYRLPLSEVVFDFYDRIKSMSKGYASLDWEMDEYLDSEIAKLSILINSEPVDALACIIHKSKVEQRGREICLRLKDLIPRQQYKIAIQAAVGGRIVARETISPYRKDVTAKLYGGDVTRRMKLLEKQKKGKKRLRSIGNVNVPHNAFIQALKIID.

A tr-type G domain is found at 4–186 (SHIRNFAIIA…AIVSRLPAPS (183 aa)). GTP-binding positions include 16-21 (DHGKST) and 133-136 (NKID).

It belongs to the TRAFAC class translation factor GTPase superfamily. Classic translation factor GTPase family. LepA subfamily.

The protein resides in the cell inner membrane. It carries out the reaction GTP + H2O = GDP + phosphate + H(+). Its function is as follows. Required for accurate and efficient protein synthesis under certain stress conditions. May act as a fidelity factor of the translation reaction, by catalyzing a one-codon backward translocation of tRNAs on improperly translocated ribosomes. Back-translocation proceeds from a post-translocation (POST) complex to a pre-translocation (PRE) complex, thus giving elongation factor G a second chance to translocate the tRNAs correctly. Binds to ribosomes in a GTP-dependent manner. This Ehrlichia chaffeensis (strain ATCC CRL-10679 / Arkansas) protein is Elongation factor 4.